The sequence spans 547 residues: MSSLINNAMSGLNAAQAALNTASNNISSYNVAGYTRQTTIMAQANSTLGAGGWVGNGVYVSGVQREYDAFITNQLRAAQTQSSGLTARYEQMSKIDNMLSTSTSSLATQMQDFFTSLQTLVSNAEDPAARQALIGKSEGLVNQFKTTDQYLRDQDKQVNIAIGASVDQINNYAKQIASLNDQISRLTGVGAGASPNNLLDQRDQLVSELNQIVGVEVSVQDGGTYNITMANGYSLVQGSTARQLAAVPSSADPSRTTVAYVDGTAGNIEIPEKLLNTGSLGGILTFRSQDLDQTRNTLGQLALAFAEAFNTQHKAGFDANGDAGEDFFAIGKPAVLQNTKNKGDVAIGATVTDASAVLATDYKISFDNNQWQVTRLASNTTFTVTPDANGKVAFDGLELTFTGTPAVNDSFTLKPVSDAIVNMDVLITDEAKIAMASEEDAGDSDNRNGQALLDLQSNSKTVGGAKSFNDAYASLVSDIGNKTATLKTSSATQGNVVTQLSNQQQSISGVNLDEEYGNLQRFQQYYLANAQVLQTANAIFDALINIR.

It belongs to the flagella basal body rod proteins family.

It is found in the secreted. The protein localises to the bacterial flagellum. The chain is Flagellar hook-associated protein 1 (flgK) from Escherichia coli (strain K12).